A 416-amino-acid chain; its full sequence is Cell division control protein 3 (416 aa).

The 276-residue stretch at 32–307 (RGFSLNIMAI…ENYRTEKLKR (276 aa)) folds into the Septin-type G domain. The tract at residues 42 to 49 (GESGLGKA) is G1 motif. Residues 42 to 49 (GESGLGKA), Ser-79, Gly-105, 184 to 192 (KSDTLTDEE), Gly-240, and Arg-256 each bind GTP. A G3 motif region spans residues 102–105 (TAPG). Positions 183–186 (AKSD) are G4 motif. Residues 323-399 (AAKQEEERAL…QLEKQKLLPQ (77 aa)) adopt a coiled-coil conformation. Residues 392–416 (EKQKLLPQDPPAQPAPQKSRKGFLR) form a disordered region.

It belongs to the TRAFAC class TrmE-Era-EngA-EngB-Septin-like GTPase superfamily. Septin GTPase family.

The protein localises to the bud neck. Plays a role in the cell cycle. Involved in the formation of the ring of filaments in the neck region at the mother-bud junction during mitosis. In Candida albicans (Yeast), this protein is Cell division control protein 3 (CDC3).